Here is a 358-residue protein sequence, read N- to C-terminus: Peptide chain release factor 1 (358 aa).

N5-methylglutamine is present on Gln-233.

It belongs to the prokaryotic/mitochondrial release factor family. Methylated by PrmC. Methylation increases the termination efficiency of RF1.

The protein localises to the cytoplasm. Peptide chain release factor 1 directs the termination of translation in response to the peptide chain termination codons UAG and UAA. This Agathobacter rectalis (strain ATCC 33656 / DSM 3377 / JCM 17463 / KCTC 5835 / VPI 0990) (Eubacterium rectale) protein is Peptide chain release factor 1.